The sequence spans 158 residues: 3-hydroxyacyl-[acyl-carrier-protein] dehydratase FabZ (158 aa).

Residue H57 is part of the active site.

It belongs to the thioester dehydratase family. FabZ subfamily.

Its subcellular location is the cytoplasm. The catalysed reaction is a (3R)-hydroxyacyl-[ACP] = a (2E)-enoyl-[ACP] + H2O. In terms of biological role, involved in unsaturated fatty acids biosynthesis. Catalyzes the dehydration of short chain beta-hydroxyacyl-ACPs and long chain saturated and unsaturated beta-hydroxyacyl-ACPs. In Helicobacter acinonychis (strain Sheeba), this protein is 3-hydroxyacyl-[acyl-carrier-protein] dehydratase FabZ.